The chain runs to 128 residues: Kinase-associated lipoprotein B (128 aa).

Residues 1–25 (MSTFETGSIVKGFYKTGVYIGEITA) form the signal peptide. A lipid anchor (N-palmitoyl cysteine) is attached at C26. Residue C26 is the site of S-diacylglycerol cysteine attachment.

It is found in the cell membrane. Its function is as follows. May play a role in the activation or the expression of KinB. The chain is Kinase-associated lipoprotein B (kapB) from Bacillus subtilis (strain 168).